Consider the following 350-residue polypeptide: Arginine N-succinyltransferase (350 aa).

Leucine 125 contributes to the succinyl-CoA binding site. Histidine 229 (proton donor) is an active-site residue.

This sequence belongs to the arginine N-succinyltransferase family.

It catalyses the reaction succinyl-CoA + L-arginine = N(2)-succinyl-L-arginine + CoA + H(+). Its pathway is amino-acid degradation; L-arginine degradation via AST pathway; L-glutamate and succinate from L-arginine: step 1/5. Its function is as follows. Catalyzes the transfer of succinyl-CoA to arginine to produce N(2)-succinylarginine. The chain is Arginine N-succinyltransferase from Yersinia pseudotuberculosis serotype IB (strain PB1/+).